The sequence spans 416 residues: Serine hydroxymethyltransferase 1 (416 aa).

(6S)-5,6,7,8-tetrahydrofolate is bound by residues Leu121 and 125-127; that span reads GHL. Position 229 is an N6-(pyridoxal phosphate)lysine (Lys229). Residues Glu245 and 354–356 each bind (6S)-5,6,7,8-tetrahydrofolate; that span reads SPF.

It belongs to the SHMT family. As to quaternary structure, homodimer. Pyridoxal 5'-phosphate is required as a cofactor.

It localises to the cytoplasm. The catalysed reaction is (6R)-5,10-methylene-5,6,7,8-tetrahydrofolate + glycine + H2O = (6S)-5,6,7,8-tetrahydrofolate + L-serine. The protein operates within one-carbon metabolism; tetrahydrofolate interconversion. It functions in the pathway amino-acid biosynthesis; glycine biosynthesis; glycine from L-serine: step 1/1. Functionally, catalyzes the reversible interconversion of serine and glycine with tetrahydrofolate (THF) serving as the one-carbon carrier. This reaction serves as the major source of one-carbon groups required for the biosynthesis of purines, thymidylate, methionine, and other important biomolecules. Also exhibits THF-independent aldolase activity toward beta-hydroxyamino acids, producing glycine and aldehydes, via a retro-aldol mechanism. The protein is Serine hydroxymethyltransferase 1 of Photobacterium profundum (strain SS9).